The following is a 342-amino-acid chain: Periplasmic protein TorT (342 aa).

A signal peptide spans 1–18; the sequence is MRVLLFLLLSLFMLPAFS.

This sequence belongs to the bacterial solute-binding protein 2 family.

The protein resides in the periplasm. Upon binding a putative inducer it probably interacts with TorS and allows it to play a role in the induction of the torCAD operon for trimethylamine N-oxide reductase. The sequence is that of Periplasmic protein TorT (torT) from Escherichia coli (strain K12).